A 709-amino-acid chain; its full sequence is Coiled-coil domain-containing protein 13 (709 aa).

Coiled-coil stretches lie at residues 70–97 (IFEK…NGRL), 139–178 (ELSK…ASAK), and 206–288 (EVKA…QRQN). Ser-258 bears the Phosphoserine mark. Residues 281-312 (KQLGQRQNKPAGSSSSEVPLSSDSRKMTAQEK) are disordered. Positions 293-302 (SSSSEVPLSS) are enriched in low complexity. Positions 323-457 (DKQESWEKLA…ELEIGQLSVQ (135 aa)) form a coiled coil. 3 disordered regions span residues 462-499 (KGGG…LGSS), 512-542 (SALT…QAQA), and 600-641 (KMRL…SSTQ). Residues Ser-469 and Ser-532 each carry the phosphoserine modification. The stretch at 539 to 604 (QAQAAEMKAL…EQHLEKMRLE (66 aa)) forms a coiled coil.

As to quaternary structure, interacts with PCM1, CEP290 and PCNT.

It is found in the cytoplasm. The protein localises to the cytoskeleton. The protein resides in the microtubule organizing center. It localises to the centrosome. Its subcellular location is the centriolar satellite. It is found in the cilium basal body. Its function is as follows. Required for primary cilia formation and promotes the localization of the ciliopathy protein BBS4 to both centriolar satellites and cilia. The chain is Coiled-coil domain-containing protein 13 from Mus musculus (Mouse).